Here is a 1447-residue protein sequence, read N- to C-terminus: DNA topoisomerase 2 (1447 aa).

ATP is bound by residues N72, N101, 129–131, and 142–149; these read SSN and GRNGYGAK. The segment at 323–325 is interaction with DNA; it reads KKK. Position 357–359 (357–359) interacts with ATP; it reads QTK. In terms of domain architecture, Toprim spans 435–552; it reads CTLILTEGDS…ELLRLPFLEE (118 aa). E441, D521, and D523 together coordinate Mg(2+). Residues 695 to 1169 enclose the Topo IIA-type catalytic domain; it reads IPSLVDGLKP…TPEMLWLDDL (475 aa). Y785 functions as the O-(5'-phospho-DNA)-tyrosine intermediate in the catalytic mechanism. The interaction with DNA stretch occupies residues 972–981; it reads KLTTTLSTNQ. Disordered stretches follow at residues 1079-1110, 1183-1231, and 1246-1447; these read EDAE…EVDP, ERAE…DGEP, and AAAK…DFNC. Residues 1081-1094 show a composition bias toward acidic residues; it reads AEQADEEDEEEEEA. Positions 1255 to 1281 are enriched in basic and acidic residues; the sequence is KEPKKPKEPKEPKVKKEPKGKQIKAEP. The segment covering 1283 to 1293 has biased composition (acidic residues); that stretch reads ASGDEVDEFDA. Position 1284 is a phosphoserine (S1284). Composition is skewed to basic and acidic residues over residues 1310 to 1325 and 1332 to 1359; these read VKKE…KKEN and SKID…ERPG. S1344 carries the post-translational modification Phosphoserine. Residue T1352 is modified to Phosphothreonine. A phosphoserine mark is found at S1374, S1385, S1392, and S1396. Positions 1374-1394 are enriched in acidic residues; it reads SDEEEDGGNVGSDDDGNASDD. A compositionally biased stretch (basic and acidic residues) spans 1395 to 1408; sequence DSPKRPAKRGREDE. Positions 1413-1423 are enriched in basic residues; sequence AKKKAPPKKRR. Over residues 1427 to 1447 the composition is skewed to acidic residues; that stretch reads ESDDDDIEIDEDDDDDSDFNC.

It belongs to the type II topoisomerase family. As to quaternary structure, homodimer. Interacts with mod(mdg4). Interacts with barr. Interacts with ph-p. Interacts with mle; the interaction mediates association with the MSL dosage compensation complex. Mg(2+) serves as cofactor. Mn(2+) is required as a cofactor. The cofactor is Ca(2+). In terms of processing, phosphorylated. Phosphorylation by casein kinase II enhances ATPase activity.

Its subcellular location is the nucleus. The protein resides in the chromosome. It is found in the cytoplasm. It carries out the reaction ATP-dependent breakage, passage and rejoining of double-stranded DNA.. In terms of biological role, control of topological states of DNA by transient breakage and subsequent rejoining of DNA strands. Topoisomerase II makes double-strand breaks. Essential during mitosis and meiosis for proper segregation of daughter chromosomes. During meiosis, it disrupts heterochromatic connections between achiasmate and chiasmate homologs after spindle assembly so that chromosomes can separate at prometaphase I. During mitosis, it functions in the separation of sister chromatids by establishing amphitelic kinetochore attachments in mitotic spindles. May have a role in chromatin condensation and chromosome structure. May be involved in X-chromosome dosage compensation, perhaps by modifying the topological state of compensated genes. Regulates activity of the gypsy chromatin insulator complex by binding to mod(mdg4) and preventing its degradation. The polypeptide is DNA topoisomerase 2 (Drosophila melanogaster (Fruit fly)).